The following is a 123-amino-acid chain: Immunoglobulin lambda variable 5-45 (123 aa).

An N-terminal signal peptide occupies residues 1-19 (MAWTPLLLLFLSHCTGSLS). Residues 20–44 (QAVLTQPSSLSASPGASASLTCTLC) form a framework-1 region. In terms of domain architecture, Ig-like spans 20 to 123 (QAVLTQPSSL…YCMIWHSSAS (104 aa)). The cysteines at positions 41 and 115 are disulfide-linked. Positions 45–53 (SGINVGTYR) are complementarity-determining-1. The framework-2 stretch occupies residues 54 to 70 (IYWYQQKPGSPPQYLLR). The segment at 68–92 (LLRYKSDSDKQQGSGVPSRFSGSKD) is disordered. Residues 71 to 77 (YKSDSDK) form a complementarity-determining-2 region. The span at 78–92 (QQGSGVPSRFSGSKD) shows a compositional bias: polar residues. A framework-3 region spans residues 78-115 (QQGSGVPSRFSGSKDASANAGILLISGLQSEDEADYYC). The segment at 116–123 (MIWHSSAS) is complementarity-determining-3.

As to quaternary structure, immunoglobulins are composed of two identical heavy chains and two identical light chains; disulfide-linked.

The protein localises to the secreted. It localises to the cell membrane. V region of the variable domain of immunoglobulin light chains that participates in the antigen recognition. Immunoglobulins, also known as antibodies, are membrane-bound or secreted glycoproteins produced by B lymphocytes. In the recognition phase of humoral immunity, the membrane-bound immunoglobulins serve as receptors which, upon binding of a specific antigen, trigger the clonal expansion and differentiation of B lymphocytes into immunoglobulins-secreting plasma cells. Secreted immunoglobulins mediate the effector phase of humoral immunity, which results in the elimination of bound antigens. The antigen binding site is formed by the variable domain of one heavy chain, together with that of its associated light chain. Thus, each immunoglobulin has two antigen binding sites with remarkable affinity for a particular antigen. The variable domains are assembled by a process called V-(D)-J rearrangement and can then be subjected to somatic hypermutations which, after exposure to antigen and selection, allow affinity maturation for a particular antigen. The sequence is that of Immunoglobulin lambda variable 5-45 from Homo sapiens (Human).